The primary structure comprises 142 residues: Hemoglobin subunit alpha-1 (142 aa).

One can recognise a Globin domain in the interval 2-142 (LLSADDKKHI…VSTVLTSKYR (141 aa)). O2 is bound at residue His-59. His-88 lines the heme b pocket.

This sequence belongs to the globin family. Heterotetramer of two alpha chains and two beta chains. Red blood cells.

In terms of biological role, involved in oxygen transport from the lung to the various peripheral tissues. This chain is Hemoglobin subunit alpha-1 (hba1), found in Xenopus laevis (African clawed frog).